The primary structure comprises 198 residues: Recombination protein RecR (198 aa).

Residues 57–72 (CSVCGHITDRDPCYIC) form a C4-type zinc finger. The region spanning 80–175 (SVVCVVQEPK…KVTRIAHGLP (96 aa)) is the Toprim domain.

It belongs to the RecR family.

Functionally, may play a role in DNA repair. It seems to be involved in an RecBC-independent recombinational process of DNA repair. It may act with RecF and RecO. The sequence is that of Recombination protein RecR from Bacillus cytotoxicus (strain DSM 22905 / CIP 110041 / 391-98 / NVH 391-98).